A 296-amino-acid chain; its full sequence is Phosphatidylserine decarboxylase proenzyme (296 aa).

Residues D100, H157, and S263 each act as charge relay system; for autoendoproteolytic cleavage activity in the active site. S263 serves as the catalytic Schiff-base intermediate with substrate; via pyruvic acid; for decarboxylase activity. S263 is subject to Pyruvic acid (Ser); by autocatalysis.

This sequence belongs to the phosphatidylserine decarboxylase family. PSD-B subfamily. Prokaryotic type I sub-subfamily. As to quaternary structure, heterodimer of a large membrane-associated beta subunit and a small pyruvoyl-containing alpha subunit. It depends on pyruvate as a cofactor. Is synthesized initially as an inactive proenzyme. Formation of the active enzyme involves a self-maturation process in which the active site pyruvoyl group is generated from an internal serine residue via an autocatalytic post-translational modification. Two non-identical subunits are generated from the proenzyme in this reaction, and the pyruvate is formed at the N-terminus of the alpha chain, which is derived from the carboxyl end of the proenzyme. The autoendoproteolytic cleavage occurs by a canonical serine protease mechanism, in which the side chain hydroxyl group of the serine supplies its oxygen atom to form the C-terminus of the beta chain, while the remainder of the serine residue undergoes an oxidative deamination to produce ammonia and the pyruvoyl prosthetic group on the alpha chain. During this reaction, the Ser that is part of the protease active site of the proenzyme becomes the pyruvoyl prosthetic group, which constitutes an essential element of the active site of the mature decarboxylase.

The protein resides in the cell membrane. The catalysed reaction is a 1,2-diacyl-sn-glycero-3-phospho-L-serine + H(+) = a 1,2-diacyl-sn-glycero-3-phosphoethanolamine + CO2. It functions in the pathway phospholipid metabolism; phosphatidylethanolamine biosynthesis; phosphatidylethanolamine from CDP-diacylglycerol: step 2/2. Catalyzes the formation of phosphatidylethanolamine (PtdEtn) from phosphatidylserine (PtdSer). The polypeptide is Phosphatidylserine decarboxylase proenzyme (Actinobacillus pleuropneumoniae serotype 7 (strain AP76)).